The sequence spans 320 residues: Glucokinase (320 aa).

12–17 (GDIGGT) serves as a coordination point for ATP.

The protein belongs to the bacterial glucokinase family.

Its subcellular location is the cytoplasm. The catalysed reaction is D-glucose + ATP = D-glucose 6-phosphate + ADP + H(+). This chain is Glucokinase, found in Nitrobacter hamburgensis (strain DSM 10229 / NCIMB 13809 / X14).